Reading from the N-terminus, the 224-residue chain is ATP-dependent dethiobiotin synthetase BioD (224 aa).

An ATP-binding site is contributed by 13-18; it reads NVGKTI. A Mg(2+)-binding site is contributed by T17. K38 is an active-site residue. S42 serves as a coordination point for substrate. Residues D55, 116 to 119, 176 to 177, and N211 each bind ATP; these read EGAG and NN. D55 and E116 together coordinate Mg(2+).

This sequence belongs to the dethiobiotin synthetase family. In terms of assembly, homodimer. It depends on Mg(2+) as a cofactor.

The protein resides in the cytoplasm. The enzyme catalyses (7R,8S)-7,8-diammoniononanoate + CO2 + ATP = (4R,5S)-dethiobiotin + ADP + phosphate + 3 H(+). It functions in the pathway cofactor biosynthesis; biotin biosynthesis; biotin from 7,8-diaminononanoate: step 1/2. Catalyzes a mechanistically unusual reaction, the ATP-dependent insertion of CO2 between the N7 and N8 nitrogen atoms of 7,8-diaminopelargonic acid (DAPA, also called 7,8-diammoniononanoate) to form a ureido ring. The protein is ATP-dependent dethiobiotin synthetase BioD of Buchnera aphidicola subsp. Acyrthosiphon pisum (strain APS) (Acyrthosiphon pisum symbiotic bacterium).